The primary structure comprises 304 residues: MSVAPIDFQQVEKRYDDKLVVDGLSFHVQPGECFGLLGPNGAGKTTTLKMLLGITHPDAGSISLCGEPVPSRARHARQRVGVVPQFDNLDPDFTVRENLLVFARYFGLTAHAARALVPPLLEFAKLESKADAKVGELSGGMKRRLTLARALVNDPDVLVLDEPTTGLDPQARHLMWERLRSLLARGKTILLTTHFMEEAERLCHRLCVIEEGRKIAEGAPRMLIEAEIGCDVIEIYGPDPVQLRDELAPFAERTEISGETLFCYVDNPEPIHARLKGRTGLRYLHRPANLEDVFLRLTGREMLD.

The region spanning 6–236 (IDFQQVEKRY…EIGCDVIEIY (231 aa)) is the ABC transporter domain. 38-45 (GPNGAGKT) lines the ATP pocket.

Belongs to the ABC transporter superfamily. Lipooligosaccharide exporter (TC 3.A.1.102) family. The complex is composed of two ATP-binding proteins (NodI) and two transmembrane proteins (NodJ).

The protein localises to the cell inner membrane. Part of the ABC transporter complex NodIJ involved in the export of the nodulation factors (Nod factors), the bacterial signal molecules that induce symbiosis and subsequent nodulation induction. Nod factors are LCO (lipo-chitin oligosaccharide), a modified beta-1,4-linked N-acetylglucosamine oligosaccharide. This subunit is responsible for energy coupling to the transport system. The polypeptide is Nod factor export ATP-binding protein I (Burkholderia pseudomallei (strain K96243)).